We begin with the raw amino-acid sequence, 427 residues long: UPF0229 protein YeaH (427 aa).

The span at 79–90 (NDHFVQNDRIER) shows a compositional bias: basic and acidic residues. The tract at residues 79 to 110 (NDHFVQNDRIERPQGGGGGSGSGQGQASQDGE) is disordered. A compositionally biased stretch (gly residues) spans 92-102 (QGGGGGSGSGQ).

Belongs to the UPF0229 family.

The protein is UPF0229 protein YeaH of Escherichia coli O127:H6 (strain E2348/69 / EPEC).